The chain runs to 165 residues: Transcription factor zip-10 (165 aa).

The span at 53–71 shows a compositional bias: low complexity; it reads ASLGTSTTSSSRCSSTESS. A disordered region spans residues 53–99; the sequence is ASLGTSTTSSSRCSSTESSAAPGKIRRGRPQQEIADGQDAHSQKKRH. The stretch at 104-150 forms a coiled coil; it reads ARQYRAQMRQKVENVKSLHDEKEQLELEVKALRQAVSGLQQENAQKD.

It localises to the nucleus. Its function is as follows. Transcription factor that regulates the expression of genes in response to changes in temperature. In particular, binds to the promoter region of genes such as asp-17 in response to severe cold to warm temperature transitions to promote gene expression. Promotes stress-induced death, particularly in older animals, following cold shock followed by warming and this may have evolved as a form of kin survival under thermal stress conditions, favoring the survival of younger animals. The polypeptide is Transcription factor zip-10 (Caenorhabditis elegans).